The following is a 169-amino-acid chain: Monothiol glutaredoxin-S15, mitochondrial (169 aa).

The N-terminal 37 residues, 1-37 (MAASLSSRLIKGIANLKAVRSSRLTSASVYQNGMMRF), are a transit peptide targeting the mitochondrion. Residues 38-61 (SSTVPSDSDTHDDFKPTQKVPPDS) are disordered. Positions 66 to 168 (KDIVENDVKD…QKLKDVSGNQ (103 aa)) constitute a Glutaredoxin domain. Lys83 is a binding site for glutathione. Cys91 contacts [2Fe-2S] cluster. Glutathione-binding positions include Lys120, Phe132, and 145–146 (SD).

This sequence belongs to the glutaredoxin family. CGFS subfamily. As to quaternary structure, [2Fe-2S]-bridged holo-homodimer. Interacts in vitro with SUFE1, BOLA1, BOLA2 and BOLA4. Interacts in vivo only with BOLA4.

The protein resides in the mitochondrion. May only reduce GSH-thiol disulfides, but not protein disulfides. Participates probably to the maturation of iron-sulfur proteins and to the regulation of the redox state of the BOLA proteins. This chain is Monothiol glutaredoxin-S15, mitochondrial, found in Arabidopsis thaliana (Mouse-ear cress).